The following is a 434-amino-acid chain: Transcription factor AP-2-epsilon (434 aa).

The disordered stretch occupies residues 30-123 (LNQGPYSSAP…GLSLDPRRDY (94 aa)). The span at 52–62 (PYFPPPYPQPP) shows a compositional bias: pro residues. A PPxY motif motif is present at residues 53–58 (YFPPPY). The span at 81-97 (SSINSIHHQHQQPSWHT) shows a compositional bias: polar residues. Residues 278-408 (RRKAANVTLL…YLLESLKGMD (131 aa)) form an H-S-H (helix-span-helix), dimerization region. The interval 415 to 434 (TGNGHSAAESKSEKDIKHRK) is disordered. Residues 422-434 (AESKSEKDIKHRK) are compositionally biased toward basic and acidic residues.

It belongs to the AP-2 family. In terms of assembly, binds DNA as a dimer. Can form homodimers or heterodimers with other AP-2 family members.

Its subcellular location is the nucleus. Functionally, sequence-specific DNA-binding protein that interacts with inducible viral and cellular enhancer elements to regulate transcription of selected genes. AP-2 factors bind to the consensus sequence 5'-GCCNNNGGC-3' and activate genes involved in a large spectrum of important biological functions. This chain is Transcription factor AP-2-epsilon, found in Xenopus laevis (African clawed frog).